The following is a 241-amino-acid chain: Geranylgeranylglyceryl phosphate synthase (241 aa).

Residues Asp26 and Ser52 each contribute to the Mg(2+) site. Sn-glycerol 1-phosphate is bound by residues 172–178, 204–205, and 226–227; these read YFEAGSG, GG, and GT.

The protein belongs to the GGGP/HepGP synthase family. Group II subfamily. Requires Mg(2+) as cofactor.

It localises to the cytoplasm. The catalysed reaction is sn-glycerol 1-phosphate + (2E,6E,10E)-geranylgeranyl diphosphate = sn-3-O-(geranylgeranyl)glycerol 1-phosphate + diphosphate. The protein operates within membrane lipid metabolism; glycerophospholipid metabolism. Prenyltransferase that catalyzes the transfer of the geranylgeranyl moiety of geranylgeranyl diphosphate (GGPP) to the C3 hydroxyl of sn-glycerol-1-phosphate (G1P). This reaction is the first ether-bond-formation step in the biosynthesis of archaeal membrane lipids. This is Geranylgeranylglyceryl phosphate synthase from Hyperthermus butylicus (strain DSM 5456 / JCM 9403 / PLM1-5).